The chain runs to 398 residues: tRNA-specific 2-thiouridylase MnmA (398 aa).

Residues alanine 18–serine 25 and leucine 44 contribute to the ATP site. Residue cysteine 112 is the Nucleophile of the active site. Cysteine 112 and cysteine 213 form a disulfide bridge. Glycine 136 contributes to the ATP binding site. The interval arginine 163–glutamine 165 is interaction with tRNA. Cysteine 213 (cysteine persulfide intermediate) is an active-site residue.

The protein belongs to the MnmA/TRMU family.

The protein resides in the cytoplasm. The enzyme catalyses S-sulfanyl-L-cysteinyl-[protein] + uridine(34) in tRNA + AH2 + ATP = 2-thiouridine(34) in tRNA + L-cysteinyl-[protein] + A + AMP + diphosphate + H(+). Its function is as follows. Catalyzes the 2-thiolation of uridine at the wobble position (U34) of tRNA, leading to the formation of s(2)U34. This Sinorhizobium medicae (strain WSM419) (Ensifer medicae) protein is tRNA-specific 2-thiouridylase MnmA.